The sequence spans 129 residues: Small ribosomal subunit protein uS8 (129 aa).

It belongs to the universal ribosomal protein uS8 family. Part of the 30S ribosomal subunit.

Its function is as follows. One of the primary rRNA binding proteins, it binds directly to 16S rRNA central domain where it helps coordinate assembly of the platform of the 30S subunit. The polypeptide is Small ribosomal subunit protein uS8 (Nanoarchaeum equitans (strain Kin4-M)).